Here is a 279-residue protein sequence, read N- to C-terminus: Alcohol dehydrogenase-related 31 kDa protein (279 aa).

11–34 serves as a coordination point for NAD(+); that stretch reads YVADCGGIALETSKVLMTKNIAKL. A substrate-binding site is contributed by Ser139. Tyr152 acts as the Proton acceptor in catalysis.

Belongs to the short-chain dehydrogenases/reductases (SDR) family.

In Drosophila madeirensis (Fruit fly), this protein is Alcohol dehydrogenase-related 31 kDa protein (Adhr).